The chain runs to 334 residues: tRNA methyltransferase 10 homolog A (334 aa).

2 disordered regions span residues 1-101 and 290-334; these read MSLE…SRKR and PLTE…EQNS. Residues 26-40 show a composition bias toward polar residues; that stretch reads HAGNNTPLQENSSAP. A coiled-coil region spans residues 62–94; the sequence is KQWEDQRELRKQKRKEKRQKRKLERQAQAEHNI. Residues 71–84 are compositionally biased toward basic residues; it reads RKQKRKEKRQKRKL. Positions 85-98 are enriched in basic and acidic residues; that stretch reads ERQAQAEHNIDANS. The 192-residue stretch at 98–289 folds into the SAM-dependent MTase TRM10-type domain; it reads SRKRFRHEVQ…SVLPQRKGAI (192 aa). Positions 305–317 are enriched in acidic residues; the sequence is QEDGEDSDSDSSI.

This sequence belongs to the class IV-like SAM-binding methyltransferase superfamily. TRM10 family.

The catalysed reaction is guanosine(9) in tRNA + S-adenosyl-L-methionine = N(1)-methylguanosine(9) in tRNA + S-adenosyl-L-homocysteine + H(+). S-adenosyl-L-methionine-dependent guanine N(1)-methyltransferase that catalyzes the formation of N(1)-methylguanine at position 9 (m1G9) in tRNAs. Probably not able to catalyze formation of N(1)-methyladenine at position 9 (m1A9) in tRNAs. The sequence is that of tRNA methyltransferase 10 homolog A (trmt10a) from Xenopus tropicalis (Western clawed frog).